An 85-amino-acid chain; its full sequence is Serine protease inhibitor Kazal-type 7 (85 aa).

The N-terminal stretch at 1-19 (MKITGGLLLLCTVVYFCSS) is a signal peptide. The Kazal-like domain maps to 26-85 (SPKKVDCSIYKKYPVVAIPCPITYLPVCGSDYITYGNECHLCTESLKSNGRVQFLHDGSC). Intrachain disulfides connect cysteine 32–cysteine 67, cysteine 45–cysteine 64, and cysteine 53–cysteine 85.

It localises to the secreted. Functionally, probable serine protease inhibitor. The sequence is that of Serine protease inhibitor Kazal-type 7 (SPINK7) from Homo sapiens (Human).